The sequence spans 187 residues: Protein TIFY 3B (187 aa).

The segment covering 1 to 10 has biased composition (basic and acidic residues); that stretch reads MTKVKDEPRA. Residues 1–50 are disordered; sequence MTKVKDEPRASVEGGCGVADGDGGAAEIGGTGSVEKSINEVRSTEIQTAE. Residues 14–32 are compositionally biased toward gly residues; sequence GGCGVADGDGGAAEIGGTG. Residues 51–86 form the Tify domain; it reads PTVPPNQLTIFFGGSVTVFDGLPSEKVQEILRIAAK. Residues 139–163 carry the Jas motif; that stretch reads PIARRHSLQRFLEKRRDRLVNKNPY. A Nuclear localization signal motif is present at residues 141 to 148; it reads ARRHSLQR. The segment at 152–187 is disordered; sequence KRRDRLVNKNPYPTSDFKKTDVPTGNVSIKEEFPTA.

This sequence belongs to the TIFY/JAZ family. As to quaternary structure, interacts with MYC2, AFPH2/NINJA, TIFY10A/JAZ1, TIFY10B/JAZ2, TIFY11A/JAZ5, TIFY11B/JAZ6, TIFY5A/JAZ8 and TIFY9/JAZ10. In terms of assembly, (Microbial infection) Interacts with the pathogenic Pseudomonas syringae HopZ1a protein. (Microbial infection) Acetylated by Pseudomonas syringae HopZ1a. In terms of processing, ubiquitinated. Targeted for degradation by the SCF(COI1) E3 ubiquitin ligase-proteasome pathway during jasmonate signaling.

Its subcellular location is the nucleus. Repressor of jasmonate responses. This is Protein TIFY 3B from Arabidopsis thaliana (Mouse-ear cress).